A 183-amino-acid polypeptide reads, in one-letter code: Transcription factor E (183 aa).

The 94-residue stretch at tyrosine 4 to arginine 97 folds into the HTH TFE/IIEalpha-type domain.

It belongs to the TFE family. In terms of assembly, monomer. Interaction with RNA polymerase subunits RpoF and RpoE is necessary for Tfe stimulatory transcription activity. Able to interact with Tbp and RNA polymerase in the absence of DNA promoter. Interacts both with the preinitiation and elongation complexes.

In terms of biological role, transcription factor that plays a role in the activation of archaeal genes transcribed by RNA polymerase. Facilitates transcription initiation by enhancing TATA-box recognition by TATA-box-binding protein (Tbp), and transcription factor B (Tfb) and RNA polymerase recruitment. Not absolutely required for transcription in vitro, but particularly important in cases where Tbp or Tfb function is not optimal. It dynamically alters the nucleic acid-binding properties of RNA polymerases by stabilizing the initiation complex and destabilizing elongation complexes. Seems to translocate with the RNA polymerase following initiation and acts by binding to the non template strand of the transcription bubble in elongation complexes. In Caldivirga maquilingensis (strain ATCC 700844 / DSM 13496 / JCM 10307 / IC-167), this protein is Transcription factor E.